The following is a 395-amino-acid chain: MLRRLLERPCTLALLVGSQLAVMMYLSLGGFRSLSALFGRDQGPTFDYSHPRDVYSNLSHLPGAPVAAGASPAEALPFCPERSPFLVGPVSVSFSPVPSLAEIVERNPRVEPGGRYRPAGCEARSRTAIIVPHRAREHHLRLLLYHLHPFLQRQQLAYGIYVIHQAGNGMFNRAKLLNVGVREALRDEEWDCLFLHDVDLLPENDHNLYVCDPRGPRHVAVAMNKFGYSLPYPQYFGGVSALTPDQYLKMNGFPNEYWGWGGEDDDIATRVRLAGMKISRPPTSVGHYKMVKHRGDKGNEENPHRFDLLVRTQNSWTQDGMNSLTYQLLAKELGPLYTNITADIGTDPRGPRAPSGPRYPPGSSQAFRQEMLQRRPPARPGPLPTANHTAPHGSH.

Topologically, residues 1-10 (MLRRLLERPC) are cytoplasmic. The chain crosses the membrane as a helical; Signal-anchor for type II membrane protein span at residues 11 to 31 (TLALLVGSQLAVMMYLSLGGF). The Lumenal portion of the chain corresponds to 32–395 (RSLSALFGRD…ANHTAPHGSH (364 aa)). The N-linked (GlcNAc...) asparagine glycan is linked to asparagine 57. A disulfide bridge links cysteine 79 with cysteine 121. UDP-alpha-D-galactose is bound by residues 132-136 (PHRAR), 171-173 (FNR), 198-199 (VD), tyrosine 228, and tryptophan 260. A disulfide bond links cysteine 192 and cysteine 211. Aspartate 199 provides a ligand contact to Mn(2+). 262 to 265 (GEDD) serves as a coordination point for N-acetyl-D-glucosamine. Residue histidine 293 participates in Mn(2+) binding. 293-295 (HRG) contributes to the UDP-alpha-D-galactose binding site. Arginine 305 is a binding site for N-acetyl-D-glucosamine. 2 N-linked (GlcNAc...) asparagine glycosylation sites follow: asparagine 339 and asparagine 387. The disordered stretch occupies residues 341–395 (TADIGTDPRGPRAPSGPRYPPGSSQAFRQEMLQRRPPARPGPLPTANHTAPHGSH).

This sequence belongs to the glycosyltransferase 7 family. Mn(2+) serves as cofactor.

It localises to the golgi apparatus. The protein localises to the golgi stack membrane. The enzyme catalyses an N-acetyl-beta-D-glucosaminyl derivative + UDP-alpha-D-galactose = a beta-D-galactosyl-(1-&gt;4)-N-acetyl-beta-D-glucosaminyl derivative + UDP + H(+). It catalyses the reaction N-acetyl-D-glucosamine + UDP-alpha-D-galactose = beta-D-galactosyl-(1-&gt;4)-N-acetyl-D-glucosamine + UDP + H(+). The catalysed reaction is a beta-D-GlcNAc-(1-&gt;3)-beta-D-Gal-(1-&gt;4)-beta-D-Glc-(1&lt;-&gt;1)-Cer(d18:1(4E)) + UDP-alpha-D-galactose = a neolactoside nLc4Cer(d18:1(4E)) + UDP + H(+). It carries out the reaction a beta-D-glucosylceramide + UDP-alpha-D-galactose = a beta-D-galactosyl-(1-&gt;4)-beta-D-glucosyl-(1&lt;-&gt;1)-ceramide + UDP + H(+). The enzyme catalyses a neolactoside IV(3)-beta-GlcNAc-nLc4Cer + UDP-alpha-D-galactose = a neolactoside nLc6Cer + UDP + H(+). Its pathway is protein modification; protein glycosylation. Responsible for the synthesis of complex-type N-linked oligosaccharides in many glycoproteins as well as the carbohydrate moieties of glycolipids. This Cricetulus griseus (Chinese hamster) protein is Beta-1,4-galactosyltransferase 3 (B4GALT3).